A 328-amino-acid polypeptide reads, in one-letter code: MASSAASPSLSLLSFTSKPPYPSGSQRLFASFRTDGLFAPLTLKSRRGRGIVVKVDDVDADGGGADEYDMDDEEVEEVDNKKDYDVEYDPLAAAIAAAGGGGDGDIAFVQSKSFISTQGWDSDMVVDYRINEDEFHKLSLMDCDFFIRKPPDPDNDVYDFREMYVTPPDTDIYSIPRVLAPMPQKYIRCAMSDYGCYNVTEPPIDAPRDPLYKSEREISKVFLTKHYRNRRTNDPEFVLDLEEIYVIDSKTKSITRARVLVTVPGGRKRDRKDDLLVIRDNGTSFKIIHVGERDDPTTVIEREEWTKTREDMEKHLRKLRDFSVSNWF.

The span at 1–14 (MASSAASPSLSLLS) shows a compositional bias: low complexity. The disordered stretch occupies residues 1 to 21 (MASSAASPSLSLLSFTSKPPY). A chloroplast-targeting transit peptide spans 1-59 (MASSAASPSLSLLSFTSKPPYPSGSQRLFASFRTDGLFAPLTLKSRRGRGIVVKVDDVD). The Nuclear localization signal motif lies at 267–275 (RKRDRKDDL). The RNA binding domain motif lies at 301–319 (EREEWTKTREDMEKHLRKL).

Subunit of the plastid-encoded RNA polymerase (PEP) complex. Component of a large nuclear subcomplex that may include other PEP subunits (e.g. PTAC12/HMR/PAP5, PTAC14/PAP7 and PTAC7/PAP12). Binds directly to PTAC12/HMR/PAP5 in the nucleus. Interacts with MTERF5. Mostly expressed in rosette leaves, stems and flowers, and, to a lower extent, in roots and cauline leaves.

The protein localises to the plastid. It is found in the chloroplast. The protein resides in the chloroplast thylakoid. It localises to the nucleus. Its subcellular location is the nucleoplasm. Its function is as follows. Essential protein involved in plastid gene expression and in chloroplast biogenesis. Links photomorphogenesis and chloroplast biogenesis through its dual localization; required for the formation of late photobodies in the nucleus, as well as for phytochrome B-mediated signaling cascade and subsequent reshaping of the plastid-encoded RNA polymerase (PEP) activity. Binds RNA via specific recognition motifs of viral origin. Recruited by MTERF5 to the transcriptionally paused region of psbEFLJ. Promotes leaf greening. This is PLASTID TRANSCRIPTIONALLY ACTIVE protein 6, chloroplastic from Arabidopsis thaliana (Mouse-ear cress).